A 535-amino-acid polypeptide reads, in one-letter code: Calcium-dependent protein kinase 5 (535 aa).

Positions 1–46 (MGNACRGSFGGKTFQGYPQPQDHSESNSNPKHNSDSPKPKKEQQPL) are disordered. Residue glycine 2 is the site of N-myristoyl glycine attachment. Cysteine 5 carries S-palmitoyl cysteine lipidation. Residues 32 to 43 (HNSDSPKPKKEQ) show a composition bias toward basic and acidic residues. The Protein kinase domain occupies 72–330 (YTLGRKLGQG…AHEVLCHPWI (259 aa)). ATP contacts are provided by residues 78 to 86 (LGQGQFGTT) and lysine 101. Aspartate 196 (proton acceptor) is an active-site residue. The autoinhibitory domain stretch occupies residues 336–366 (APDRALDPAVLSRLKHFSAMNKLKKMALRVI). 4 EF-hand domains span residues 373–408 (EEIA…YGST), 409–444 (LKDI…LNKL), 445–480 (DREE…HNIT), and 484–514 (FEDI…GNPC). Residues aspartate 386, aspartate 388, serine 390, glutamate 397, aspartate 422, aspartate 424, serine 426, threonine 428, glutamate 433, aspartate 458, aspartate 460, serine 462, tyrosine 464, glutamate 469, aspartate 492, aspartate 494, aspartate 496, arginine 498, and glutamate 503 each coordinate Ca(2+).

The protein belongs to the protein kinase superfamily. Ser/Thr protein kinase family. CDPK subfamily.

Its subcellular location is the cell membrane. The enzyme catalyses L-seryl-[protein] + ATP = O-phospho-L-seryl-[protein] + ADP + H(+). The catalysed reaction is L-threonyl-[protein] + ATP = O-phospho-L-threonyl-[protein] + ADP + H(+). Activated by calcium. Autophosphorylation may play an important role in the regulation of the kinase activity. Its function is as follows. Regulates the production of reactive oxygen species (ROS) by NADPH oxidase. The polypeptide is Calcium-dependent protein kinase 5 (CPK5) (Solanum tuberosum (Potato)).